Reading from the N-terminus, the 134-residue chain is Large-conductance mechanosensitive channel (134 aa).

Transmembrane regions (helical) follow at residues 16–36 and 76–96; these read VVDMAVGIIIGVAFGKIVSSF and GVFLQAIFDFIIIAFAIFIAV.

Belongs to the MscL family. In terms of assembly, homopentamer.

The protein resides in the cell inner membrane. Functionally, channel that opens in response to stretch forces in the membrane lipid bilayer. May participate in the regulation of osmotic pressure changes within the cell. This chain is Large-conductance mechanosensitive channel, found in Thioalkalivibrio sulfidiphilus (strain HL-EbGR7).